Consider the following 324-residue polypeptide: Serpentine receptor class gamma-10 (324 aa).

Helical transmembrane passes span Ser-39–Gly-59, Met-69–Gly-89, Ile-91–Ile-111, Thr-128–Met-146, Ile-155–Leu-175, Leu-206–Gly-226, Met-246–Ala-266, and Ile-279–Ser-299.

Belongs to the nematode receptor-like protein srg family.

It is found in the membrane. The protein is Serpentine receptor class gamma-10 (srg-10) of Caenorhabditis elegans.